Here is a 515-residue protein sequence, read N- to C-terminus: Histidine ammonia-lyase (515 aa).

The 5-imidazolinone (Ala-Gly) cross-link spans 142 to 144 (ASG). Serine 143 carries the 2,3-didehydroalanine (Ser) modification.

The protein belongs to the PAL/histidase family. Contains an active site 4-methylidene-imidazol-5-one (MIO), which is formed autocatalytically by cyclization and dehydration of residues Ala-Ser-Gly.

The protein resides in the cytoplasm. The enzyme catalyses L-histidine = trans-urocanate + NH4(+). The protein operates within amino-acid degradation; L-histidine degradation into L-glutamate; N-formimidoyl-L-glutamate from L-histidine: step 1/3. The sequence is that of Histidine ammonia-lyase from Bradyrhizobium sp. (strain ORS 278).